We begin with the raw amino-acid sequence, 670 residues long: Meiotic sister-chromatid recombination protein 6, mitochondrial (670 aa).

Residues 1–27 (MLFSRASKIRVSQLMRRLQSTAVGRAA) constitute a mitochondrion transit peptide.

It is found in the mitochondrion. Its function is as follows. May be involved in the control of meiotic sister-chromatid recombination. This Eremothecium gossypii (strain ATCC 10895 / CBS 109.51 / FGSC 9923 / NRRL Y-1056) (Yeast) protein is Meiotic sister-chromatid recombination protein 6, mitochondrial (MSC6).